Here is a 378-residue protein sequence, read N- to C-terminus: L-asparaginase-like protein GF11609 (378 aa).

The N-terminal stretch at 1 to 21 (MCSPLPLLILRLLLLTHPSLG) is a signal peptide. 3 cysteine pairs are disulfide-bonded: cysteine 71/cysteine 76, cysteine 170/cysteine 186, and cysteine 325/cysteine 352.

This sequence belongs to the Ntn-hydrolase family.

The sequence is that of L-asparaginase-like protein GF11609 from Drosophila ananassae (Fruit fly).